The primary structure comprises 379 residues: Probable leucine aminopeptidase ARB_01443 (379 aa).

The signal sequence occupies residues 1 to 18 (MKIATLAVVSAFAATAIA). 2 residues coordinate Zn(2+): His-182 and Asp-201. N-linked (GlcNAc...) asparagine glycans are attached at residues Asn-202 and Asn-226. Positions 240 and 267 each coordinate Zn(2+). A disulfide bridge links Cys-312 with Cys-316. Position 345 (His-345) interacts with Zn(2+).

The protein belongs to the peptidase M28 family. M28E subfamily. Monomer. Zn(2+) serves as cofactor.

It is found in the secreted. In terms of biological role, probable extracellular aminopeptidase which contributes to pathogenicity. This chain is Probable leucine aminopeptidase ARB_01443, found in Arthroderma benhamiae (strain ATCC MYA-4681 / CBS 112371) (Trichophyton mentagrophytes).